Reading from the N-terminus, the 133-residue chain is Fatty acid-binding protein homolog 2 (133 aa).

A fatty acid-binding positions include Arg-107 and 127–129 (RTY).

The protein belongs to the calycin superfamily. Fatty-acid binding protein (FABP) family.

May play a role in the acquisition, storage, and transport of lipids, and may be important to the organism since it is incapable of synthesizing most of its lipids de novo. The polypeptide is Fatty acid-binding protein homolog 2 (FABP2) (Echinococcus granulosus (Hydatid tapeworm)).